Reading from the N-terminus, the 106-residue chain is ATP-dependent Clp protease adapter protein ClpS (106 aa).

The tract at residues 1–22 (MTDEPNQDDPQGPEVEAAKPSL) is disordered.

Belongs to the ClpS family. As to quaternary structure, binds to the N-terminal domain of the chaperone ClpA.

Functionally, involved in the modulation of the specificity of the ClpAP-mediated ATP-dependent protein degradation. The chain is ATP-dependent Clp protease adapter protein ClpS from Halorhodospira halophila (strain DSM 244 / SL1) (Ectothiorhodospira halophila (strain DSM 244 / SL1)).